Reading from the N-terminus, the 1134-residue chain is Phytochrome 1 (1134 aa).

Residues 219–401 (DIGLLCDTVV…VFGLQLNMEA (183 aa)) enclose the GAF domain. Phytochromobilin is bound at residue Cys324. The 72-residue stretch at 616 to 687 (VANEMVRLIE…RLLYLALQGD (72 aa)) folds into the PAS 1 domain. A PAC domain is found at 690–746 (QNVELKLKTFGGQKDKEAVILVVNACASRDVSDNVVGVCFVGQDVTGQKVVMDKFTR). The PAS 2 domain maps to 750 to 821 (DYKAIVQNPN…KGQDAVTKFM (72 aa)). The Histidine kinase domain occupies 901 to 1121 (YIRQEIKNPL…LVSLELPLAQ (221 aa)).

This sequence belongs to the phytochrome family. In terms of assembly, homodimer. In terms of processing, contains one covalently linked phytochromobilin chromophore.

In terms of biological role, regulatory photoreceptor which exists in two forms that are reversibly interconvertible by light: the Pr form that absorbs maximally in the red region of the spectrum and the Pfr form that absorbs maximally in the far-red region. Photoconversion of Pr to Pfr induces an array of morphogenic responses, whereas reconversion of Pfr to Pr cancels the induction of those responses. Pfr controls the expression of a number of nuclear genes including those encoding the small subunit of ribulose-bisphosphate carboxylase, chlorophyll A/B binding protein, protochlorophyllide reductase, rRNA, etc. It also controls the expression of its own gene(s) in a negative feedback fashion. This is Phytochrome 1 (PHY1) from Selaginella martensii (Martens's spike moss).